Reading from the N-terminus, the 291-residue chain is Taste receptor type 2 member 16 (291 aa).

Position 1 (Met-1) is a topological domain, extracellular. Residues 2 to 22 (IPIQLTVFFMIIYVLESLTII) traverse the membrane as a helical segment. At 23–41 (VQSSLIVAVLGREWLQVRR) the chain is on the cytoplasmic side. A helical membrane pass occupies residues 42–62 (LMPVDMILISLGISRFCLQWA). At 63–84 (SMLNNFCSYFNLNYVLCNLTIT) the chain is on the extracellular side. N-linked (GlcNAc...) asparagine glycosylation occurs at Asn-80. Residues 85–105 (WEFFNILTFWLNSLLTVFYCI) traverse the membrane as a helical segment. Residues 106 to 125 (KVSSFTHHIFLWLRWRILRL) lie on the Cytoplasmic side of the membrane. Residues 126–146 (FPWILLGSLMITCVTIIPSAI) traverse the membrane as a helical segment. Topologically, residues 147–182 (GNYIQIQLLTMEHLPRNSTVTDKLEKFHQYQFQAHT) are extracellular. Asn-163 carries an N-linked (GlcNAc...) asparagine glycan. The helical transmembrane segment at 183 to 203 (VALVIPFILFLASTILLMASL) threads the bilayer. Topologically, residues 204 to 228 (TKQIQHHSTGHCNPSMKAHFTALRS) are cytoplasmic. The helical transmembrane segment at 229 to 249 (LAVLFIVFTSYFLTILITIIG) threads the bilayer. Residues 250-257 (TLFDKRCW) lie on the Extracellular side of the membrane. Residues 258-278 (LWVWEAFVYAFILMHSTSLML) form a helical membrane-spanning segment. The Cytoplasmic segment spans residues 279–291 (SSPTLKRILKGKC).

It belongs to the G-protein coupled receptor T2R family. Interacts with RTP3 and RTP4.

The protein resides in the cell membrane. Its function is as follows. Receptor that may play a role in the perception of bitterness and is gustducin-linked. May play a role in sensing the chemical composition of the gastrointestinal content. The activity of this receptor may stimulate alpha gustducin, mediate PLC-beta-2 activation and lead to the gating of TRPM5. The chain is Taste receptor type 2 member 16 (TAS2R16) from Pan troglodytes (Chimpanzee).